A 292-amino-acid polypeptide reads, in one-letter code: CCR4-NOT transcription complex subunit 8 (292 aa).

Residues Asp40, Glu42, Asp161, and Asp230 each contribute to the a divalent metal cation site.

This sequence belongs to the CAF1 family. As to quaternary structure, component of the CCR4-NOT complex; distinct complexes seem to exist that differ in the participation of probably mutually exclusive catalytic subunits; the complex contains two deadenylase subunits, CNOT6 or CNOT6L, and CNOT7 or CNOT8. In the complex interacts directly with CNOT1. Interacts with BTG1, BTG2 and TOB1. Interacts with BTG4.

Its subcellular location is the cytoplasm. The protein localises to the nucleus. It catalyses the reaction Exonucleolytic cleavage of poly(A) to 5'-AMP.. Has 3'-5' poly(A) exoribonuclease activity for synthetic poly(A) RNA substrate. Its function seems to be partially redundant with that of CNOT7. Catalytic component of the CCR4-NOT complex which is linked to various cellular processes including bulk mRNA degradation, miRNA-mediated repression, translational repression during translational initiation and general transcription regulation. During miRNA-mediated repression the complex also seems to act as translational repressor during translational initiation. Additional complex functions may be a consequence of its influence on mRNA expression. Associates with members of the BTG family such as TOB1 and BTG2 and is required for their anti-proliferative activity. The sequence is that of CCR4-NOT transcription complex subunit 8 (CNOT8) from Homo sapiens (Human).